We begin with the raw amino-acid sequence, 117 residues long: Iron-sulfur cluster insertion protein ErpA (117 aa).

3 residues coordinate iron-sulfur cluster: Cys-45, Cys-109, and Cys-111.

It belongs to the HesB/IscA family. Homodimer. Iron-sulfur cluster serves as cofactor.

Functionally, required for insertion of 4Fe-4S clusters for at least IspG. This is Iron-sulfur cluster insertion protein ErpA from Saccharophagus degradans (strain 2-40 / ATCC 43961 / DSM 17024).